Reading from the N-terminus, the 310-residue chain is Olfactory receptor 8I2 (310 aa).

At 1–25 (MAGNNFTEVTVFILSGFANHPELQV) the chain is on the extracellular side. Residue N5 is glycosylated (N-linked (GlcNAc...) asparagine). A helical transmembrane segment spans residues 26-46 (SLFLMFLFIYLFTVLGNLGLI). Topologically, residues 47-54 (TLIRMDSQ) are cytoplasmic. Residues 55-75 (LHTPMYFFLSNLAFIDIFYSS) form a helical membrane-spanning segment. Residues 76–99 (TVTPKALVNFQSNRRSISFVGCFV) are Extracellular-facing. Cysteines 97 and 188 form a disulfide. A helical transmembrane segment spans residues 100–120 (QMYFFVGLVCCECFLLGSMAY). Residues 121–139 (NRYIAICNPLLYSVVMSQK) are Cytoplasmic-facing. The helical transmembrane segment at 140 to 160 (VSNWLGVMPYVIGFTSSLISV) threads the bilayer. Residues 161 to 196 (WVISSLAFCDSSINHFFCDTTALLALSCVDTFGTEM) are Extracellular-facing. Residues 197–216 (VSFVLAGFTLLSSLLIITVT) form a helical membrane-spanning segment. Over 217 to 236 (YIIIISAILRIQSAAGRQKA) the chain is Cytoplasmic. Residues 237 to 257 (FSTCASHLMAVTIFYGSLIFT) form a helical membrane-spanning segment. At 258–270 (YLQPDNTSSLTQA) the chain is on the extracellular side. The chain crosses the membrane as a helical span at residues 271–291 (QVASVFYTIVIPMLNPLIYSL). The Cytoplasmic portion of the chain corresponds to 292–310 (RNKDVKNALLRVIHRKLFP).

This sequence belongs to the G-protein coupled receptor 1 family.

The protein localises to the cell membrane. Functionally, odorant receptor. The polypeptide is Olfactory receptor 8I2 (OR8I2) (Homo sapiens (Human)).